Consider the following 117-residue polypeptide: Immunoglobulin kappa variable 1D-17 (117 aa).

The signal sequence occupies residues 1–22 (MDMRVPAQLLGLLLLWFPGARC). The tract at residues 23–45 (NIQMTQSPSAMSASVGDRVTITC) is framework-1. The Ig-like domain maps to 23–117 (NIQMTQSPSA…YYCLQHNSYP (95 aa)). Cys-45 and Cys-110 form a disulfide bridge. The interval 46–56 (RARQGISNYLA) is complementarity-determining-1. Residues 57 to 71 (WFQQKPGKVPKHLIY) form a framework-2 region. Residues 72–78 (AASSLQS) form a complementarity-determining-2 region. Residues 79–110 (GVPSRFSGSGSGTEFTLTISSLQPEDFATYYC) are framework-3. Residues 111-117 (LQHNSYP) are complementarity-determining-3.

As to quaternary structure, immunoglobulins are composed of two identical heavy chains and two identical light chains; disulfide-linked.

The protein resides in the secreted. The protein localises to the cell membrane. Functionally, v region of the variable domain of immunoglobulin light chains that participates in the antigen recognition. Immunoglobulins, also known as antibodies, are membrane-bound or secreted glycoproteins produced by B lymphocytes. In the recognition phase of humoral immunity, the membrane-bound immunoglobulins serve as receptors which, upon binding of a specific antigen, trigger the clonal expansion and differentiation of B lymphocytes into immunoglobulins-secreting plasma cells. Secreted immunoglobulins mediate the effector phase of humoral immunity, which results in the elimination of bound antigens. The antigen binding site is formed by the variable domain of one heavy chain, together with that of its associated light chain. Thus, each immunoglobulin has two antigen binding sites with remarkable affinity for a particular antigen. The variable domains are assembled by a process called V-(D)-J rearrangement and can then be subjected to somatic hypermutations which, after exposure to antigen and selection, allow affinity maturation for a particular antigen. This chain is Immunoglobulin kappa variable 1D-17, found in Homo sapiens (Human).